Reading from the N-terminus, the 302-residue chain is Acetylesterase (302 aa).

Residues 1 to 21 (MGRFLTTTALALLATGGAATA) form the signal peptide. Asn84 and Asn101 each carry an N-linked (GlcNAc...) asparagine glycan.

It belongs to the carbohydrate esterase CE16 family.

The protein resides in the secreted. It catalyses the reaction an acetyl ester + H2O = an aliphatic alcohol + acetate + H(+). Its function is as follows. Acetyl esterase that acts as an exo-deacetylase. Liberates acetic acid from xylo-oligomers. The protein is Acetylesterase of Thermothelomyces thermophilus (Myceliophthora thermophila).